We begin with the raw amino-acid sequence, 303 residues long: Putative band 7 family protein R614 (303 aa).

The protein belongs to the band 7/mec-2 family.

In Acanthamoeba polyphaga (Amoeba), this protein is Putative band 7 family protein R614.